Here is a 102-residue protein sequence, read N- to C-terminus: Large ribosomal subunit protein bL36m (102 aa).

Belongs to the bacterial ribosomal protein bL36 family. As to quaternary structure, component of the mitochondrial ribosome large subunit (39S) which comprises a 16S rRNA and about 50 distinct proteins.

It is found in the mitochondrion. The polypeptide is Large ribosomal subunit protein bL36m (Mrpl36) (Mus musculus (Mouse)).